A 943-amino-acid polypeptide reads, in one-letter code: Isoleucine--tRNA ligase 1 (943 aa).

Residues 58–68 carry the 'HIGH' region motif; the sequence is PYANGTIHIGH. Glutamate 567 provides a ligand contact to L-isoleucyl-5'-AMP. Residues 608–612 carry the 'KMSKS' region motif; that stretch reads KMSKS. Lysine 611 contributes to the ATP binding site. The Zn(2+) site is built by cysteine 906, cysteine 909, cysteine 926, and cysteine 929.

This sequence belongs to the class-I aminoacyl-tRNA synthetase family. IleS type 1 subfamily. As to quaternary structure, monomer. It depends on Zn(2+) as a cofactor.

The protein resides in the cytoplasm. It catalyses the reaction tRNA(Ile) + L-isoleucine + ATP = L-isoleucyl-tRNA(Ile) + AMP + diphosphate. Its function is as follows. Catalyzes the attachment of isoleucine to tRNA(Ile). As IleRS can inadvertently accommodate and process structurally similar amino acids such as valine, to avoid such errors it has two additional distinct tRNA(Ile)-dependent editing activities. One activity is designated as 'pretransfer' editing and involves the hydrolysis of activated Val-AMP. The other activity is designated 'posttransfer' editing and involves deacylation of mischarged Val-tRNA(Ile). Functionally, confers resistance to the antibiotic mupirocin (pseudomonic acid A), an Ile-analog produced by P.fluorescens NCIMB 10586 itself that competitively inhibits activation by Ile-tRNA synthetase, thus inhibiting protein biosynthesis. This Pseudomonas fluorescens protein is Isoleucine--tRNA ligase 1 (ileS1).